A 207-amino-acid polypeptide reads, in one-letter code: Large ribosomal subunit protein uL3 (207 aa).

Residues 129 to 152 (AGGPAGHGSRFQRHPGSIGSNTTP) are disordered.

Belongs to the universal ribosomal protein uL3 family. Part of the 50S ribosomal subunit. Forms a cluster with proteins L14 and L19.

Its function is as follows. One of the primary rRNA binding proteins, it binds directly near the 3'-end of the 23S rRNA, where it nucleates assembly of the 50S subunit. The chain is Large ribosomal subunit protein uL3 from Leptospira biflexa serovar Patoc (strain Patoc 1 / ATCC 23582 / Paris).